Consider the following 260-residue polypeptide: uncharacterized protein (260 aa).

Positions Ala6–Asn239 constitute a Radical SAM core domain.

This is an uncharacterized protein from Sinorhizobium fredii (strain NBRC 101917 / NGR234).